The sequence spans 431 residues: Enolase (431 aa).

Gln-163 lines the (2R)-2-phosphoglycerate pocket. Catalysis depends on Glu-205, which acts as the Proton donor. Mg(2+) contacts are provided by Asp-242, Glu-288, and Asp-315. Positions 340, 369, 370, and 391 each coordinate (2R)-2-phosphoglycerate. The active-site Proton acceptor is Lys-340.

Belongs to the enolase family. The cofactor is Mg(2+).

It localises to the cytoplasm. Its subcellular location is the secreted. The protein resides in the cell surface. The enzyme catalyses (2R)-2-phosphoglycerate = phosphoenolpyruvate + H2O. It participates in carbohydrate degradation; glycolysis; pyruvate from D-glyceraldehyde 3-phosphate: step 4/5. Catalyzes the reversible conversion of 2-phosphoglycerate (2-PG) into phosphoenolpyruvate (PEP). It is essential for the degradation of carbohydrates via glycolysis. The protein is Enolase of Bacillus cereus (strain B4264).